The sequence spans 487 residues: MLLPGLLLLLLLLAGTRWLWGQWKLRKLHLPPLAPGFLHFLQPNLPIYLLGLTQKLGPIYRIRLGMQDVVVLNSNRTIEEALIQKWVDFAGRPHMLNGKMDLDLSLGDYSLMWKAHKKLSRSALMLGMRDSMEPLIEQLTQEFCERMRAQAGTPVAIHKEFSFLTCSIISCLTFGDKDSTLVQTLHDCVQDLLQAWNHWSIQILTIIPLLRFLPNPGLQKLKQIQESRDHIVKQQLKQHKDSLVAGQWKDMIDYMLQGVEKQRDGKDEERLHEGHVHMSVVDLFIGGTETTATTLSWAVAFLLHHPEIQKRLQEELDLKLGPGSQLLYRNRMQLPLLMATIAEVLRLRPVVPLALPHRATRASSISGYDIPKDMVIIPNIQGANLDEMVWELPSKFWPDRFLEPGKNPRTPSFGCGARVCLGEPLARLELFVVLARLLQAFTLLPPPDGTLPSLQPQPYAGINLPIPPFQVRLQPRNLAPQDQGERP.

Heme b is bound by residues arginine 92 and lysine 117. Residue arginine 228 participates in 17alpha-hydroxyprogesterone binding. Arginine 228 serves as a coordination point for progesterone. Heme b is bound by residues histidine 357, arginine 418, and cysteine 420.

The protein belongs to the cytochrome P450 family. Heme b is required as a cofactor.

Its subcellular location is the endoplasmic reticulum membrane. The protein resides in the microsome membrane. It carries out the reaction progesterone + reduced [NADPH--hemoprotein reductase] + O2 = 21-hydroxyprogesterone + oxidized [NADPH--hemoprotein reductase] + H2O + H(+). The enzyme catalyses 17alpha-hydroxyprogesterone + reduced [NADPH--hemoprotein reductase] + O2 = 11-deoxycortisol + oxidized [NADPH--hemoprotein reductase] + H2O + H(+). Its function is as follows. A cytochrome P450 monooxygenase that plays a major role in adrenal steroidogenesis. Catalyzes the hydroxylation at C-21 of progesterone and 17alpha-hydroxyprogesterone to respectively form 11-deoxycorticosterone and 11-deoxycortisol, intermediate metabolites in the biosynthetic pathway of mineralocorticoids and glucocorticoids. Mechanistically, uses molecular oxygen inserting one oxygen atom into a substrate, and reducing the second into a water molecule, with two electrons provided by NADPH via cytochrome P450 reductase (CPR; NADPH-ferrihemoprotein reductase). This Mus musculus (Mouse) protein is Steroid 21-hydroxylase (Cyp21).